Consider the following 674-residue polypeptide: MLAKPAAQFTLEEAQAEVEKLRKQLNQWRLEYYTKDAPTVTDNVYDDHYRDLQALEEAYPKLVTPDSPTQEVGDVINSDFAKVQHPIPMLSMGDVFSFEELSEWDARMQSNVGHPVDYNVELKIDGLALSLIYENGKLVQGSTRGDGNVGEDVTRNVLTIASVPKQLKQPLSLEVRGECYMPKAAFAKLNARQETEGGTPFANPRNAAAGSLRQLDAKVTAARELDTFIYTLIEPEQFNVTTQHEAIAFMQALGFTTNPSSEVAGDMQAIDTYIKKYTTDRDALPYGIDGIVLKVNDLALQAQLGNTVKVPRWEIAYKFPPEEAETVIHDIVWTVGRTGVVTPTAVMDPVQLAGTTVARATLHNADMIRDKDIRIGDTVMLHKAGDIIPEVSRVLVAKRPADTPPAPIPEVCPSCGQKLVHLDDEVALRCINPMCPAQVQEQLTHFASRNAMNIDGLGPKIVAQLQAKHLVKDVADLYHLTAADLAKLDKFKEKSINNLLSAINNSRQNSVERLIFGLGIRHVGGKAARILAEHFGDLDHLMTASQEAIADVPNIGPTIGEAIVTYFKAATVQKLITQLREADVNLRYTGPTKPVVKDSFVAGKTVVITGKFAEFSRPALTKQLEGLGAKVTGSVSKKTDILIAGDAAGSKLAKAQSLNVPIMNETELLANLKD.

Residues Asp-42–Asp-46, Ser-91–Met-92, and Glu-121 each bind NAD(+). Lys-123 (N6-AMP-lysine intermediate) is an active-site residue. NAD(+) is bound by residues Arg-144, Glu-178, Lys-294, and Lys-318. Zn(2+)-binding residues include Cys-412, Cys-415, Cys-430, and Cys-435. One can recognise a BRCT domain in the interval Val-596–Asp-674.

The protein belongs to the NAD-dependent DNA ligase family. LigA subfamily. Mg(2+) is required as a cofactor. Requires Mn(2+) as cofactor.

It carries out the reaction NAD(+) + (deoxyribonucleotide)n-3'-hydroxyl + 5'-phospho-(deoxyribonucleotide)m = (deoxyribonucleotide)n+m + AMP + beta-nicotinamide D-nucleotide.. DNA ligase that catalyzes the formation of phosphodiester linkages between 5'-phosphoryl and 3'-hydroxyl groups in double-stranded DNA using NAD as a coenzyme and as the energy source for the reaction. It is essential for DNA replication and repair of damaged DNA. This chain is DNA ligase, found in Lacticaseibacillus paracasei (strain ATCC 334 / BCRC 17002 / CCUG 31169 / CIP 107868 / KCTC 3260 / NRRL B-441) (Lactobacillus paracasei).